A 429-amino-acid polypeptide reads, in one-letter code: Phosphomethylpyrimidine synthase (429 aa).

Residues Asn-66, Met-94, Tyr-123, His-162, 184–186 (SRG), 225–228 (DALR), and Glu-264 each bind substrate. His-268 is a binding site for Zn(2+). A substrate-binding site is contributed by Tyr-291. His-332 contacts Zn(2+). [4Fe-4S] cluster is bound by residues Cys-408, Cys-411, and Cys-415.

The protein belongs to the ThiC family. The cofactor is [4Fe-4S] cluster.

The catalysed reaction is 5-amino-1-(5-phospho-beta-D-ribosyl)imidazole + S-adenosyl-L-methionine = 4-amino-2-methyl-5-(phosphooxymethyl)pyrimidine + CO + 5'-deoxyadenosine + formate + L-methionine + 3 H(+). It functions in the pathway cofactor biosynthesis; thiamine diphosphate biosynthesis. Its function is as follows. Catalyzes the synthesis of the hydroxymethylpyrimidine phosphate (HMP-P) moiety of thiamine from aminoimidazole ribotide (AIR) in a radical S-adenosyl-L-methionine (SAM)-dependent reaction. This is Phosphomethylpyrimidine synthase from Sulfurisphaera tokodaii (strain DSM 16993 / JCM 10545 / NBRC 100140 / 7) (Sulfolobus tokodaii).